A 443-amino-acid chain; its full sequence is Xaa-Pro dipeptidase (443 aa).

The Mn(2+) site is built by Asp-246, Asp-257, His-339, Glu-384, and Glu-423.

This sequence belongs to the peptidase M24B family. Bacterial-type prolidase subfamily. Requires Mn(2+) as cofactor.

The enzyme catalyses Xaa-L-Pro dipeptide + H2O = an L-alpha-amino acid + L-proline. In terms of biological role, splits dipeptides with a prolyl residue in the C-terminal position. In Klebsiella pneumoniae (strain 342), this protein is Xaa-Pro dipeptidase.